The primary structure comprises 1098 residues: Bifunctional helicase and thymine dioxygenase JBP2 (1098 aa).

The segment at 1 to 540 is thymine dioxygenase; the sequence is MLNGLTRVST…PPLFVPTRLA (540 aa). Fe cation-binding residues include His-415, Asp-417, and His-465. Arg-479 contacts 2-oxoglutarate. Residues 541-1098 form a DNA Helicase region; sequence SHLAPVQLAA…RYQESVRESE (558 aa). Positions 555–730 constitute a Helicase ATP-binding domain; the sequence is VERTEKQSGC…YRLVGWVNKG (176 aa). 568–575 contributes to the ATP binding site; it reads MTMGLGKT. A DEAH box motif is present at residues 681–684; the sequence is DEGH. Residues 897-1057 enclose the Helicase C-terminal domain; it reads VLVDIVLRVQ…ALPDELEDCA (161 aa).

In the C-terminal section; belongs to the SNF2/RAD54 helicase family. It in the N-terminal section; belongs to the TET family. JBP2 subfamily. Fe(2+) is required as a cofactor.

It is found in the nucleus. It carries out the reaction ATP + H2O = ADP + phosphate + H(+). The catalysed reaction is thymine + 2-oxoglutarate + O2 = 5-hydroxymethyluracil + succinate + CO2. Dioxygenase that catalyzes the first step of DNA base J (beta-d-glucosyl-HOMedU) biosynthesis by converting thymine to 5-hydroxymethyluracil (HOMedU). DNA base J is a hypermodified thymidine residue found in the genome of kinetoplastid parasites, which is localized primarily to repetitive DNA, namely the telomeres, and is implicated in the regulation of antigenic variation. Probably also acts as a DNA helicase. Recognizes and binds specific regions of the genome, hydrolyzes ATP and allows the DNA base J de novo synthesis. Involved in initial synthesis of DNA base J, JBP1 being able to act via the basal level of DNA base J and propagate further synthesis. In contrast to JBP1, it does not specifically bind DNA base J, however it binds chromatin. This Leishmania tarentolae (Sauroleishmania tarentolae) protein is Bifunctional helicase and thymine dioxygenase JBP2 (JBP2).